Reading from the N-terminus, the 401-residue chain is Mannonate dehydratase (401 aa).

The protein belongs to the mannonate dehydratase family. The cofactor is Fe(2+). Requires Mn(2+) as cofactor.

The catalysed reaction is D-mannonate = 2-dehydro-3-deoxy-D-gluconate + H2O. It functions in the pathway carbohydrate metabolism; pentose and glucuronate interconversion. Its function is as follows. Catalyzes the dehydration of D-mannonate. This chain is Mannonate dehydratase, found in Brucella melitensis biotype 2 (strain ATCC 23457).